The chain runs to 216 residues: ATP-dependent dethiobiotin synthetase BioD (216 aa).

An ATP-binding site is contributed by 12–17 (GVGKSY). S16 contacts Mg(2+). The active site involves K37. T41 contacts substrate. Residues H53 and E115 each contribute to the Mg(2+) site. Residue 115–118 (EGAG) participates in ATP binding.

The protein belongs to the dethiobiotin synthetase family. In terms of assembly, homodimer. Requires Mg(2+) as cofactor.

The protein localises to the cytoplasm. It carries out the reaction (7R,8S)-7,8-diammoniononanoate + CO2 + ATP = (4R,5S)-dethiobiotin + ADP + phosphate + 3 H(+). The protein operates within cofactor biosynthesis; biotin biosynthesis; biotin from 7,8-diaminononanoate: step 1/2. In terms of biological role, catalyzes a mechanistically unusual reaction, the ATP-dependent insertion of CO2 between the N7 and N8 nitrogen atoms of 7,8-diaminopelargonic acid (DAPA, also called 7,8-diammoniononanoate) to form a ureido ring. This is ATP-dependent dethiobiotin synthetase BioD from Wolinella succinogenes (strain ATCC 29543 / DSM 1740 / CCUG 13145 / JCM 31913 / LMG 7466 / NCTC 11488 / FDC 602W) (Vibrio succinogenes).